The chain runs to 469 residues: Solute carrier family 52, riboflavin transporter, member 3 (469 aa).

Over 1–2 (MA) the chain is Cytoplasmic. The chain crosses the membrane as a helical span at residues 3-23 (FLMHLLVCVFGMGSWVTINGL). The Extracellular portion of the chain corresponds to 24–43 (WVELPLLVMELPEGWYLPSY). Residues 44–64 (LTVVIQLANIGPLLVTLLHHF) traverse the membrane as a helical segment. Residues 65–71 (RPSCLSE) lie on the Cytoplasmic side of the membrane. Residues 72–92 (VPIIFTLLGVGTVTCIIFAFL) traverse the membrane as a helical segment. At 93 to 97 (WNMTS) the chain is on the extracellular side. N94 carries N-linked (GlcNAc...) asparagine glycosylation. The helical transmembrane segment at 98–118 (WVLDGHHSIAFLVLTFFLALV) threads the bilayer. Over 119 to 137 (DCTSSVTFLPFMSRLPTYY) the chain is Cytoplasmic. A helical membrane pass occupies residues 138 to 158 (LTTFFVGEGLSGLLPALVALA). Over 159–220 (QGSGLTTCVN…SRYLPAHFSP (62 aa)) the chain is Extracellular. An N-linked (GlcNAc...) asparagine glycan is attached at N168. Residues 221–241 (LVFFLLLSIMMACCLVAFFVL) traverse the membrane as a helical segment. Residues 242-292 (QRQPRCWEASVEDLLNDQVTLHSIRPREENDLGPAGTVDSSQGQGYLEEKA) are Cytoplasmic-facing. S251 is subject to Phosphoserine. A helical transmembrane segment spans residues 293-313 (APCCPAHLAFIYTLVAFVNAL). The Extracellular segment spans residues 314–335 (TNGMLPSVQTYSCLSYGPVAYH). Residues 336–356 (LAATLSIVANPLASLVSMFLP) traverse the membrane as a helical segment. At 357-359 (NRS) the chain is on the cytoplasmic side. A helical transmembrane segment spans residues 360–380 (LLFLGVLSVLGTCFGGYNMAM). Residues 381 to 396 (AVMSPCPLLQGHWGGE) are Extracellular-facing. A disulfide bridge links C386 with C463. The chain crosses the membrane as a helical span at residues 397-417 (VLIVASWVLFSGCLSYVKVML). Over 418-427 (GVVLRDLSRS) the chain is Cytoplasmic. A helical transmembrane segment spans residues 428-448 (ALLWCGAAVQLGSLLGALLMF). At 449–469 (PLVNVLRLFSSADFCNLHCPA) the chain is on the extracellular side.

Belongs to the riboflavin transporter family. Predominantly expressed in testis. Highly expressed in small intestine and prostate.

It localises to the apical cell membrane. The protein localises to the cell membrane. It is found in the nucleus membrane. The protein resides in the cytoplasm. The enzyme catalyses riboflavin(in) = riboflavin(out). Its activity is regulated as follows. Activity is strongly inhibited by riboflavin analogs, such as lumiflavin, flavin mononucleotide (FMN), flavin adenine dinucleotide (FAD), by methylene blue, and to a lesser extent by amiloride. Riboflavin transport is Na(+)-independent at low pH but significantly reduced by Na(+) depletion under neutral pH conditions. Its function is as follows. Plasma membrane transporter mediating the uptake by cells of the water soluble vitamin B2/riboflavin that plays a key role in biochemical oxidation-reduction reactions of the carbohydrate, lipid, and amino acid metabolism. Humans are unable to synthesize vitamin B2/riboflavin and must obtain it via intestinal absorption. This chain is Solute carrier family 52, riboflavin transporter, member 3 (SLC52A3), found in Homo sapiens (Human).